The chain runs to 384 residues: Deoxyguanosinetriphosphate triphosphohydrolase-like protein (384 aa).

The region spanning 62-198 is the HD domain; the sequence is RLTHSLEVST…AALADDISYI (137 aa).

It belongs to the dGTPase family. Type 2 subfamily.

This Rickettsia conorii (strain ATCC VR-613 / Malish 7) protein is Deoxyguanosinetriphosphate triphosphohydrolase-like protein.